The primary structure comprises 368 residues: Probable protein phosphatase 2C 58 (368 aa).

The 307-residue stretch at 23–329 (KFGLSSMQGW…DNMTMILVQF (307 aa)) folds into the PPM-type phosphatase domain. Positions 57, 58, 272, and 320 each coordinate Mn(2+). The tract at residues 336 to 368 (NKNVSPAEQSAADKQPTGDTHWSEIHVTEESSS) is disordered. The segment covering 356 to 368 (HWSEIHVTEESSS) has biased composition (basic and acidic residues).

It belongs to the PP2C family. Requires Mg(2+) as cofactor. Mn(2+) is required as a cofactor.

It catalyses the reaction O-phospho-L-seryl-[protein] + H2O = L-seryl-[protein] + phosphate. The enzyme catalyses O-phospho-L-threonyl-[protein] + H2O = L-threonyl-[protein] + phosphate. The protein is Probable protein phosphatase 2C 58 of Oryza sativa subsp. japonica (Rice).